Here is a 157-residue protein sequence, read N- to C-terminus: Probable succinate transporter subunit YjjB (157 aa).

4 consecutive transmembrane segments (helical) span residues 8 to 28, 50 to 70, 87 to 107, and 129 to 149; these read LALA…AMVF, MILM…SMLV, VFTV…TAMI, and FLTA…PGLW.

This sequence belongs to the ThrE exporter (TC 2.A.79) family. As to quaternary structure, the transporter is composed of YjjB and YjjP.

Its subcellular location is the cell inner membrane. Its function is as follows. Involved in succinate export with YjjP. Both proteins are required for export. The polypeptide is Probable succinate transporter subunit YjjB (Escherichia coli O1:K1 / APEC).